Reading from the N-terminus, the 588-residue chain is Arylsulfatase L (588 aa).

Positions 1-31 (MLHLHHSWLCFRSWLAGMLSVLLGLVPSASS) are cleaved as a signal peptide. N-linked (GlcNAc...) asparagine glycosylation occurs at Asn32. Ca(2+) contacts are provided by Asp46 and Asp47. Asn58 carries N-linked (GlcNAc...) asparagine glycosylation. Residue Cys86 coordinates Ca(2+). The active-site Nucleophile is Cys86. A 3-oxoalanine (Cys) modification is found at Cys86. Asn125 carries N-linked (GlcNAc...) asparagine glycosylation. Lys145 provides a ligand contact to substrate. His147 is a catalytic residue. N-linked (GlcNAc...) asparagine glycosylation is present at Asn258. His301 lines the substrate pocket. The N-linked (GlcNAc...) asparagine glycan is linked to Asn344. 2 residues coordinate Ca(2+): Asp353 and His354. Lys378 contributes to the substrate binding site.

Belongs to the sulfatase family. Ca(2+) serves as cofactor. The conversion to 3-oxoalanine (also known as C-formylglycine, FGly), of a serine or cysteine residue in prokaryotes and of a cysteine residue in eukaryotes, is critical for catalytic activity.

It is found in the golgi apparatus. Its subcellular location is the golgi stack. The enzyme catalyses an aryl sulfate + H2O = a phenol + sulfate + H(+). Exhibits arylsulfatase activity towards the artificial substrate 4-methylumbelliferyl sulfate. May be essential for the correct composition of cartilage and bone matrix during development. Has no activity toward steroid sulfates. The protein is Arylsulfatase L (ARSL) of Macaca fascicularis (Crab-eating macaque).